A 301-amino-acid chain; its full sequence is Phospholipase A1 (301 aa).

An intrachain disulfide couples Cys-4 to Cys-87. The Nucleophile role is filled by Ser-137. The active-site Charge relay system is the Asp-165. Disulfide bonds link Cys-176–Cys-181 and Cys-219–Cys-228. Catalysis depends on His-230, which acts as the Charge relay system. Intrachain disulfides connect Cys-245–Cys-269, Cys-246–Cys-294, and Cys-262–Cys-267.

It belongs to the AB hydrolase superfamily. Lipase family. In terms of tissue distribution, expressed by the venom gland.

The protein localises to the secreted. It carries out the reaction a 1,2-diacyl-sn-glycero-3-phosphocholine + H2O = a 2-acyl-sn-glycero-3-phosphocholine + a fatty acid + H(+). Catalyzes the hydrolysis of phosphatidylcholine with phospholipase A1 activity. May act as an allergen and induce hemolytic activity. This Vespa crabro (European hornet) protein is Phospholipase A1.